Here is a 258-residue protein sequence, read N- to C-terminus: Tryptophan synthase alpha chain (258 aa).

Active-site proton acceptor residues include E46 and D57.

It belongs to the TrpA family. Tetramer of two alpha and two beta chains.

It carries out the reaction (1S,2R)-1-C-(indol-3-yl)glycerol 3-phosphate + L-serine = D-glyceraldehyde 3-phosphate + L-tryptophan + H2O. Its pathway is amino-acid biosynthesis; L-tryptophan biosynthesis; L-tryptophan from chorismate: step 5/5. Its function is as follows. The alpha subunit is responsible for the aldol cleavage of indoleglycerol phosphate to indole and glyceraldehyde 3-phosphate. The chain is Tryptophan synthase alpha chain from Phocaeicola vulgatus (strain ATCC 8482 / DSM 1447 / JCM 5826 / CCUG 4940 / NBRC 14291 / NCTC 11154) (Bacteroides vulgatus).